Here is a 384-residue protein sequence, read N- to C-terminus: Methylthioribose-1-phosphate isomerase (384 aa).

Residue Asp255 is the Proton donor of the active site.

This sequence belongs to the eIF-2B alpha/beta/delta subunits family. MtnA subfamily.

The protein resides in the cytoplasm. The protein localises to the nucleus. It catalyses the reaction 5-(methylsulfanyl)-alpha-D-ribose 1-phosphate = 5-(methylsulfanyl)-D-ribulose 1-phosphate. It functions in the pathway amino-acid biosynthesis; L-methionine biosynthesis via salvage pathway; L-methionine from S-methyl-5-thio-alpha-D-ribose 1-phosphate: step 1/6. Its function is as follows. Catalyzes the interconversion of methylthioribose-1-phosphate (MTR-1-P) into methylthioribulose-1-phosphate (MTRu-1-P). This is Methylthioribose-1-phosphate isomerase (mri1) from Talaromyces marneffei (strain ATCC 18224 / CBS 334.59 / QM 7333) (Penicillium marneffei).